The primary structure comprises 379 residues: Succinate--CoA ligase [ADP-forming] subunit beta (379 aa).

In terms of domain architecture, ATP-grasp spans 9 to 237 (RDILARYGIP…SSDEPEAEQR (229 aa)). Residues K45, 52–54 (GRG), I94, and E99 contribute to the ATP site. Mg(2+) contacts are provided by N192 and D206. Substrate-binding positions include N257 and 314–316 (GIT).

Belongs to the succinate/malate CoA ligase beta subunit family. In terms of assembly, heterotetramer of two alpha and two beta subunits. Mg(2+) serves as cofactor.

The enzyme catalyses succinate + ATP + CoA = succinyl-CoA + ADP + phosphate. It carries out the reaction GTP + succinate + CoA = succinyl-CoA + GDP + phosphate. The protein operates within carbohydrate metabolism; tricarboxylic acid cycle; succinate from succinyl-CoA (ligase route): step 1/1. Its function is as follows. Succinyl-CoA synthetase functions in the citric acid cycle (TCA), coupling the hydrolysis of succinyl-CoA to the synthesis of either ATP or GTP and thus represents the only step of substrate-level phosphorylation in the TCA. The beta subunit provides nucleotide specificity of the enzyme and binds the substrate succinate, while the binding sites for coenzyme A and phosphate are found in the alpha subunit. The sequence is that of Succinate--CoA ligase [ADP-forming] subunit beta from Roseiflexus sp. (strain RS-1).